Consider the following 354-residue polypeptide: Inactive ADP-ribosyltransferase arh2 (354 aa).

This sequence belongs to the ADP-ribosylglycohydrolase family. In terms of tissue distribution, expressed in heart (at protein level). A short form is detected in both heart and tadpole tail (at protein level).

Its subcellular location is the cytoplasm. It is found in the myofibril. The protein localises to the sarcomere. Functionally, required for myofibril assembly and outgrowth of the cardiac chambers in the developing heart. Appears to be catalytically inactive, showing no activity against O-acetyl-ADP-ribose. The chain is Inactive ADP-ribosyltransferase arh2 (adprhl1) from Xenopus laevis (African clawed frog).